A 97-amino-acid chain; its full sequence is Ferredoxin-like protein YdiT (97 aa).

This sequence belongs to the bacterial-type ferredoxin family. FixX subfamily.

Could be a 3Fe-4S cluster-containing protein. Probably participates in a redox process with YdiQ, YdiR and YdiS. The polypeptide is Ferredoxin-like protein YdiT (ydiT) (Escherichia coli (strain K12)).